The following is a 428-amino-acid chain: Histidinol dehydrogenase (428 aa).

Positions 126, 188, and 211 each coordinate NAD(+). 3 residues coordinate substrate: serine 234, glutamine 256, and histidine 259. Positions 256 and 259 each coordinate Zn(2+). Residues glutamate 324 and histidine 325 each act as proton acceptor in the active site. Substrate contacts are provided by histidine 325, aspartate 358, glutamate 412, and histidine 417. Aspartate 358 is a binding site for Zn(2+). Histidine 417 contacts Zn(2+).

Belongs to the histidinol dehydrogenase family. The cofactor is Zn(2+).

It carries out the reaction L-histidinol + 2 NAD(+) + H2O = L-histidine + 2 NADH + 3 H(+). It functions in the pathway amino-acid biosynthesis; L-histidine biosynthesis; L-histidine from 5-phospho-alpha-D-ribose 1-diphosphate: step 9/9. Functionally, catalyzes the sequential NAD-dependent oxidations of L-histidinol to L-histidinaldehyde and then to L-histidine. In Chlorobium chlorochromatii (strain CaD3), this protein is Histidinol dehydrogenase.